We begin with the raw amino-acid sequence, 227 residues long: Phosphoglycolate phosphatase (227 aa).

Asp9 (nucleophile) is an active-site residue. Mg(2+)-binding residues include Asp9, Asp11, and Asp171.

It belongs to the HAD-like hydrolase superfamily. CbbY/CbbZ/Gph/YieH family. Mg(2+) serves as cofactor.

It catalyses the reaction 2-phosphoglycolate + H2O = glycolate + phosphate. The protein operates within organic acid metabolism; glycolate biosynthesis; glycolate from 2-phosphoglycolate: step 1/1. Specifically catalyzes the dephosphorylation of 2-phosphoglycolate. Is involved in the dissimilation of the intracellular 2-phosphoglycolate formed during the DNA repair of 3'-phosphoglycolate ends, a major class of DNA lesions induced by oxidative stress. The protein is Phosphoglycolate phosphatase of Mesorhizobium japonicum (strain LMG 29417 / CECT 9101 / MAFF 303099) (Mesorhizobium loti (strain MAFF 303099)).